The chain runs to 277 residues: Thymidylate synthase (277 aa).

Arg-21 is a dUMP binding site. A (6R)-5,10-methylene-5,6,7,8-tetrahydrofolate-binding site is contributed by His-51. 126 to 127 (RR) serves as a coordination point for dUMP. Cys-159 (nucleophile) is an active-site residue. Residues 179–182 (RSAD), Asn-190, and 220–222 (HLY) each bind dUMP. Asp-182 contributes to the (6R)-5,10-methylene-5,6,7,8-tetrahydrofolate binding site. Ser-276 is a binding site for (6R)-5,10-methylene-5,6,7,8-tetrahydrofolate.

It belongs to the thymidylate synthase family. Bacterial-type ThyA subfamily. As to quaternary structure, homodimer.

It is found in the cytoplasm. It catalyses the reaction dUMP + (6R)-5,10-methylene-5,6,7,8-tetrahydrofolate = 7,8-dihydrofolate + dTMP. The protein operates within pyrimidine metabolism; dTTP biosynthesis. In terms of biological role, catalyzes the reductive methylation of 2'-deoxyuridine-5'-monophosphate (dUMP) to 2'-deoxythymidine-5'-monophosphate (dTMP) while utilizing 5,10-methylenetetrahydrofolate (mTHF) as the methyl donor and reductant in the reaction, yielding dihydrofolate (DHF) as a by-product. This enzymatic reaction provides an intracellular de novo source of dTMP, an essential precursor for DNA biosynthesis. The polypeptide is Thymidylate synthase (Saccharophagus degradans (strain 2-40 / ATCC 43961 / DSM 17024)).